The sequence spans 405 residues: Na(+)-translocating NADH-quinone reductase subunit F (405 aa).

A helical membrane pass occupies residues 3 to 23; it reads IILGIVMFTVIVLALALMILF. Residues 32-124 form the 2Fe-2S ferredoxin-type domain; it reads GDITIKVNDE…DMDIEVPEEV (93 aa). Residues C67, C73, C76, and C108 each coordinate [2Fe-2S] cluster. The FAD-binding FR-type domain occupies 127 to 267; that stretch reads VKKWECTVIS…SGPFGEFFAK (141 aa).

This sequence belongs to the NqrF family. In terms of assembly, composed of six subunits; NqrA, NqrB, NqrC, NqrD, NqrE and NqrF. The cofactor is [2Fe-2S] cluster. FAD is required as a cofactor.

The protein resides in the cell inner membrane. It catalyses the reaction a ubiquinone + n Na(+)(in) + NADH + H(+) = a ubiquinol + n Na(+)(out) + NAD(+). Its function is as follows. NQR complex catalyzes the reduction of ubiquinone-1 to ubiquinol by two successive reactions, coupled with the transport of Na(+) ions from the cytoplasm to the periplasm. The first step is catalyzed by NqrF, which accepts electrons from NADH and reduces ubiquinone-1 to ubisemiquinone by a one-electron transfer pathway. The sequence is that of Na(+)-translocating NADH-quinone reductase subunit F from Neisseria gonorrhoeae (strain ATCC 700825 / FA 1090).